A 1420-amino-acid chain; its full sequence is DNA-directed RNA polymerase subunit beta' (1420 aa).

Cys72, Cys74, Cys87, and Cys90 together coordinate Zn(2+). Mg(2+) contacts are provided by Asp462, Asp464, and Asp466. Residues Cys816, Cys896, Cys903, and Cys906 each coordinate Zn(2+).

Belongs to the RNA polymerase beta' chain family. As to quaternary structure, the RNAP catalytic core consists of 2 alpha, 1 beta, 1 beta' and 1 omega subunit. When a sigma factor is associated with the core the holoenzyme is formed, which can initiate transcription. Mg(2+) serves as cofactor. Zn(2+) is required as a cofactor.

It catalyses the reaction RNA(n) + a ribonucleoside 5'-triphosphate = RNA(n+1) + diphosphate. Functionally, DNA-dependent RNA polymerase catalyzes the transcription of DNA into RNA using the four ribonucleoside triphosphates as substrates. The sequence is that of DNA-directed RNA polymerase subunit beta' from Blochmanniella floridana.